The following is a 423-amino-acid chain: N-acylneuraminate cytidylyltransferase B (423 aa).

The substrate site is built by Arg-30, Asn-40, Arg-88, Ser-97, Ser-99, and Gln-120. The active site involves Arg-178.

Belongs to the CMP-NeuNAc synthase family. Homotetramer.

It is found in the cytoplasm. The enzyme catalyses an N-acylneuraminate + CTP = a CMP-N-acyl-beta-neuraminate + diphosphate. It participates in amino-sugar metabolism; N-acetylneuraminate metabolism. Catalyzes the activation of 2-keto-3-deoxy-D-glycero-D-galacto-nononic acid (KDN) to cytidine 5'-monophosphate 2-keto-3-deoxy-D-glycero-D-galacto-nononic acid (CMP-KDN), a substrate required for the addition of sialic acid. Also has weak activity towards N-acetylneuraminic acid (NeuNAc) and N-glycolylneuraminic acid (Neu5Gc). In Danio rerio (Zebrafish), this protein is N-acylneuraminate cytidylyltransferase B.